The following is a 193-amino-acid chain: Ion-translocating oxidoreductase complex subunit A (193 aa).

The next 6 membrane-spanning stretches (helical) occupy residues 5–25 (LLLLIGTVLVNNFVLVKFLGL), 39–59 (IGMGLATTFVLTLASVCSYLI), 63–83 (ILAPLGIEYLRTMSFILVIAV), 102–122 (VLGIFLPLITTNCAVLGVALL), 134–154 (IIYGFGAAVGFSLVLILFSAM), and 171–191 (SIAMITAGLMSLAFMGFTGLV).

Belongs to the NqrDE/RnfAE family. In terms of assembly, the complex is composed of six subunits: RnfA, RnfB, RnfC, RnfD, RnfE and RnfG.

It is found in the cell inner membrane. Functionally, part of a membrane-bound complex that couples electron transfer with translocation of ions across the membrane. This is Ion-translocating oxidoreductase complex subunit A from Aliivibrio salmonicida (strain LFI1238) (Vibrio salmonicida (strain LFI1238)).